Consider the following 584-residue polypeptide: DNA ligase (584 aa).

Position 249 (E249) interacts with ATP. Catalysis depends on K251, which acts as the N6-AMP-lysine intermediate. Residues R256, R271, E301, F341, R416, and K422 each coordinate ATP.

Belongs to the ATP-dependent DNA ligase family. Requires Mg(2+) as cofactor.

The enzyme catalyses ATP + (deoxyribonucleotide)n-3'-hydroxyl + 5'-phospho-(deoxyribonucleotide)m = (deoxyribonucleotide)n+m + AMP + diphosphate.. Functionally, DNA ligase that seals nicks in double-stranded DNA during DNA replication, DNA recombination and DNA repair. This Pyrobaculum arsenaticum (strain DSM 13514 / JCM 11321 / PZ6) protein is DNA ligase.